Reading from the N-terminus, the 220-residue chain is MAILFAVVARGTTILAKHAWCGGNFLEVTEQILAKIPSENNKLTYPHGNYLFHYICQDRIVYLCITDDDFERSRAFNFLNEIKKRFQTTYGSRAQTALPYAMNSEFSSVLAAQLKHHSENKGLDKVMETQAQVDELKGIMVRNIDLVAQRGERLELLIDKTENLVDSSVTFKTTSRNLARAMCMKNLKLTIIIIIVSIVFIYIIVSPLCGGFTWPSCVKK.

N-acetylalanine is present on alanine 2. Residues 2 to 188 are Cytoplasmic-facing; it reads AILFAVVARG…ARAMCMKNLK (187 aa). Residues 7–110 form the Longin domain; it reads VVARGTTILA…AMNSEFSSVL (104 aa). In terms of domain architecture, v-SNARE coiled-coil homology spans 125 to 185; sequence KVMETQAQVD…RNLARAMCMK (61 aa). Residues serine 167 and serine 168 each carry the phosphoserine modification. The helical; Anchor for type IV membrane protein transmembrane segment at 189–209 threads the bilayer; that stretch reads LTIIIIIVSIVFIYIIVSPLC. Over 210 to 220 the chain is Vesicular; sequence GGFTWPSCVKK.

This sequence belongs to the synaptobrevin family. Component of the SNARE complex composed of STX4, SNAP23 and VAMP7 that binds SYT7 during lysosomal exocytosis. Component of the SNARE complex composed of STX7, STX8, VAMP7 and VTI1B that is required for heterotypic fusion of late endosomes with lysosomes in liver cells. May interact with STX17. Interacts with PICALM. Interacts with RAB21.

It localises to the cytoplasmic vesicle. It is found in the secretory vesicle membrane. The protein localises to the golgi apparatus. The protein resides in the trans-Golgi network membrane. Its subcellular location is the late endosome membrane. It localises to the lysosome membrane. It is found in the endoplasmic reticulum membrane. The protein localises to the phagosome membrane. The protein resides in the synapse. Its subcellular location is the synaptosome. Functionally, involved in the targeting and/or fusion of transport vesicles to their target membrane during transport of proteins from the early endosome to the lysosome. Required for heterotypic fusion of late endosomes with lysosomes and homotypic lysosomal fusion. Required for calcium regulated lysosomal exocytosis. Involved in the export of chylomicrons from the endoplasmic reticulum to the cis Golgi. Required for exocytosis of mediators during eosinophil and neutrophil degranulation, and target cell killing by natural killer cells. Required for focal exocytosis of late endocytic vesicles during phagosome formation. The sequence is that of Vesicle-associated membrane protein 7 (VAMP7) from Pongo abelii (Sumatran orangutan).